Here is a 397-residue protein sequence, read N- to C-terminus: DnaJ homolog subfamily A member 1 (397 aa).

In terms of domain architecture, J spans threonine 6–glycine 68. Residue lysine 66 is modified to N6-acetyllysine. Serine 83 carries the phosphoserine modification. Residues glycine 121 to lysine 205 form a CR-type zinc finger. Positions 134, 137, 150, 153, 177, 180, 193, and 196 each coordinate Zn(2+). CXXCXGXG motif repeat units follow at residues cysteine 134–glycine 141, cysteine 150–glycine 157, cysteine 177–glycine 184, and cysteine 193–lysine 200. Position 335 is a phosphoserine (serine 335). A disordered region spans residues valine 352 to serine 397. A compositionally biased stretch (acidic residues) spans glutamate 353–aspartate 365. Tyrosine 381 is modified (phosphotyrosine). Residue cysteine 394 is modified to Cysteine methyl ester. Cysteine 394 carries the S-farnesyl cysteine lipid modification. Residues glutamine 395–serine 397 constitute a propeptide, removed in mature form.

Identified in a complex with HSPA1B and BAX. Interacts with RNF207.

The protein localises to the membrane. The protein resides in the cytoplasm. Its subcellular location is the microsome. It is found in the mitochondrion. It localises to the nucleus. The protein localises to the perinuclear region. In terms of biological role, co-chaperone for HSPA8/Hsc70. Plays a role in protein transport into mitochondria via its role as co-chaperone. Functions as co-chaperone for HSPA1B and negatively regulates the translocation of BAX from the cytosol to mitochondria in response to cellular stress, thereby protecting cells against apoptosis. Stimulates ATP hydrolysis, but not the folding of unfolded proteins mediated by HSPA1A (in vitro). Promotes apoptosis in response to cellular stress mediated by exposure to anisomycin or UV. This Chlorocebus aethiops (Green monkey) protein is DnaJ homolog subfamily A member 1 (DNAJA1).